A 207-amino-acid polypeptide reads, in one-letter code: Large ribosomal subunit protein uL4 (207 aa).

The interval 56 to 77 is disordered; sequence FVSGGGKKPWRQKGTGRARHGS. Residues 63 to 77 show a composition bias toward basic residues; the sequence is KPWRQKGTGRARHGS.

Belongs to the universal ribosomal protein uL4 family. Part of the 50S ribosomal subunit.

In terms of biological role, one of the primary rRNA binding proteins, this protein initially binds near the 5'-end of the 23S rRNA. It is important during the early stages of 50S assembly. It makes multiple contacts with different domains of the 23S rRNA in the assembled 50S subunit and ribosome. Its function is as follows. Forms part of the polypeptide exit tunnel. This chain is Large ribosomal subunit protein uL4, found in Phytoplasma australiense.